Reading from the N-terminus, the 55-residue chain is Large ribosomal subunit protein bL33 (55 aa).

It belongs to the bacterial ribosomal protein bL33 family.

In Paenarthrobacter aurescens (strain TC1), this protein is Large ribosomal subunit protein bL33.